Reading from the N-terminus, the 124-residue chain is Small ribosomal subunit protein uS12 (124 aa).

Positions 1–28 (MPTISQLIGSERKRLTRKTKSPALKSCP) are disordered. Aspartate 89 is modified (3-methylthioaspartic acid). The segment at 104–124 (TAGVKDRRQSRSKYGAKAPKD) is disordered.

Belongs to the universal ribosomal protein uS12 family. As to quaternary structure, part of the 30S ribosomal subunit. Contacts proteins S8 and S17. May interact with IF1 in the 30S initiation complex.

In terms of biological role, with S4 and S5 plays an important role in translational accuracy. Its function is as follows. Interacts with and stabilizes bases of the 16S rRNA that are involved in tRNA selection in the A site and with the mRNA backbone. Located at the interface of the 30S and 50S subunits, it traverses the body of the 30S subunit contacting proteins on the other side and probably holding the rRNA structure together. The combined cluster of proteins S8, S12 and S17 appears to hold together the shoulder and platform of the 30S subunit. This is Small ribosomal subunit protein uS12 from Prochlorococcus marinus (strain MIT 9312).